The sequence spans 339 residues: Methylthioribose-1-phosphate isomerase (339 aa).

Substrate contacts are provided by residues 52–54 (RGA), R89, and Q188. The active-site Proton donor is D229. 239 to 240 (NK) is a binding site for substrate.

This sequence belongs to the eIF-2B alpha/beta/delta subunits family. MtnA subfamily.

The catalysed reaction is 5-(methylsulfanyl)-alpha-D-ribose 1-phosphate = 5-(methylsulfanyl)-D-ribulose 1-phosphate. The protein operates within amino-acid biosynthesis; L-methionine biosynthesis via salvage pathway; L-methionine from S-methyl-5-thio-alpha-D-ribose 1-phosphate: step 1/6. Catalyzes the interconversion of methylthioribose-1-phosphate (MTR-1-P) into methylthioribulose-1-phosphate (MTRu-1-P). This is Methylthioribose-1-phosphate isomerase from Anaeromyxobacter dehalogenans (strain 2CP-C).